A 573-amino-acid polypeptide reads, in one-letter code: Solute carrier family 41 member 2 (573 aa).

Residues 1–162 are Extracellular-facing; sequence MTNSKGRSIT…KESSGIMALQ (162 aa). Phosphoserine is present on residues serine 136 and serine 137. The chain crosses the membrane as a helical span at residues 163 to 183; it reads ILVPFLLAGFGTVSAGMVLDI. At 184–195 the chain is on the cytoplasmic side; that stretch reads VQHWEVFRKVTE. The chain crosses the membrane as a helical span at residues 196 to 216; the sequence is VFILVPALLGLKGNLEMTLAS. The Extracellular segment spans residues 217–245; that stretch reads RLSTAVNIGKMDSPIEKWNLIIGNLALKQ. Residues 246 to 266 traverse the membrane as a helical segment; the sequence is VQATVVGFLAAVAAIILGWIP. At 267–282 the chain is on the cytoplasmic side; the sequence is EGKYYLDHSILLCSSS. A helical transmembrane segment spans residues 283-303; the sequence is VATAFIASLLQGIIMVGVIVG. Over 304–313 the chain is Extracellular; sequence SKKTGINPDN. A helical membrane pass occupies residues 314-334; it reads VATPIAASFGDLITLAILAWI. Residues 335 to 347 lie on the Cytoplasmic side of the membrane; it reads SQGLYSCLETYYY. The helical transmembrane segment at 348 to 368 threads the bilayer; the sequence is ISPLVGVFFLALTPIWIIIAA. At 369 to 376 the chain is on the extracellular side; that stretch reads KHPATRTV. The chain crosses the membrane as a helical span at residues 377–397; that stretch reads LHSGWEPVITAMVISSIGGLI. Residues 398–406 lie on the Cytoplasmic side of the membrane; sequence LDTTVSDPN. A helical transmembrane segment spans residues 407-427; the sequence is LVGIVVYTPVINGIGGNLVAI. Residues 428 to 469 lie on the Extracellular side of the membrane; sequence QASRISTYLHLHSIPGELPDEPKGCYYPFRTFFGPGVNNKSA. Residues 470 to 490 form a helical membrane-spanning segment; that stretch reads QVLLLLVIPGHLIFLYTIHLM. Residues 491–498 are Cytoplasmic-facing; that stretch reads KSGHTSLT. A helical transmembrane segment spans residues 499–519; it reads IIFIVVYLFAAVLQVFTLLWI. Residues 520–543 lie on the Extracellular side of the membrane; that stretch reads ADWMVHHFWRKGKDPDSFSIPYLT. The chain crosses the membrane as a helical span at residues 544 to 564; that stretch reads ALGDLLGTALLALSFHFLWLI. Residues 565-573 lie on the Cytoplasmic side of the membrane; sequence GDRDGDVGD.

This sequence belongs to the SLC41A transporter family.

It is found in the cell membrane. The catalysed reaction is Mg(2+)(in) = Mg(2+)(out). It carries out the reaction Mn(2+)(in) = Mn(2+)(out). It catalyses the reaction Co(2+)(in) = Co(2+)(out). The enzyme catalyses Ni(2+)(in) = Ni(2+)(out). The catalysed reaction is Fe(2+)(in) = Fe(2+)(out). Its function is as follows. Acts as a plasma-membrane magnesium transporter. Can also mediate the transport of other divalent metal cations in an order of Ba(2+) &gt; Ni(2+) &gt; Co(2+) &gt; Fe(2+) &gt; Mn(2+). The polypeptide is Solute carrier family 41 member 2 (SLC41A2) (Macaca fascicularis (Crab-eating macaque)).